Here is a 382-residue protein sequence, read N- to C-terminus: Mannitol-1-phosphate 5-dehydrogenase (382 aa).

NAD(+) is bound at residue 4-15; the sequence is AVHFGAGNIGRG.

It belongs to the mannitol dehydrogenase family. In terms of assembly, monomer.

The enzyme catalyses D-mannitol 1-phosphate + NAD(+) = beta-D-fructose 6-phosphate + NADH + H(+). This Streptococcus mutans serotype c (strain ATCC 700610 / UA159) protein is Mannitol-1-phosphate 5-dehydrogenase (mtlD).